A 288-amino-acid polypeptide reads, in one-letter code: Probable chromosome 1-partitioning protein ParB (288 aa).

It belongs to the ParB family.

In terms of biological role, involved in chromosome partition. Localize to both poles of the predivisional cell following completion of DNA replication. Binds to the DNA origin of replication. The polypeptide is Probable chromosome 1-partitioning protein ParB (parB1) (Deinococcus radiodurans (strain ATCC 13939 / DSM 20539 / JCM 16871 / CCUG 27074 / LMG 4051 / NBRC 15346 / NCIMB 9279 / VKM B-1422 / R1)).